Here is a 105-residue protein sequence, read N- to C-terminus: Large ribosomal subunit protein uL24 (105 aa).

It belongs to the universal ribosomal protein uL24 family. In terms of assembly, part of the 50S ribosomal subunit.

Functionally, one of two assembly initiator proteins, it binds directly to the 5'-end of the 23S rRNA, where it nucleates assembly of the 50S subunit. One of the proteins that surrounds the polypeptide exit tunnel on the outside of the subunit. The polypeptide is Large ribosomal subunit protein uL24 (Rhodospirillum centenum (strain ATCC 51521 / SW)).